The chain runs to 467 residues: MPLTLYDKIWNDHLVDQQDDGTALLFVDRHLVHEVTSPQAFEGLRNSNRKVRQPGLTLAVADHNVPTTDRSKGIADAESKIQVDTLESNCKEFGVQYLGMNDKRQGIVHIIGPEQGFTQPGTVIVCGDSHTATHGAFGALAFGIGTSEVEHVLATQTLVQKKAKNFRINVNGKLPIGVTSKDVILQIIGQIGTAGGTGSVIEYAGSLISSLSVEQRMTICNMTIEGGARAGLIAPDEKIFEYLKGKPMSPKNENWDKAMKYWESLKTDDGAKFDKEINLVAEDILPMITWGTSPQDVITIDGKVPNPKNEQDEDKKNSLERSLNYMGLKADTLATDIKIDKVFIGSCTNGRIEDLREAAKILKDKKKASHVQAMVVPGSGLVKEQAEQEGLDKIFIASGFEWREPGCSMCLAMNADKLKPGERCASTSNRNFEGRQGRGGRTHLVSPGMAAAAAISGNLDDVRKYQN.

Residues cysteine 347, cysteine 407, and cysteine 410 each coordinate [4Fe-4S] cluster.

The protein belongs to the aconitase/IPM isomerase family. LeuC type 1 subfamily. As to quaternary structure, heterodimer of LeuC and LeuD. It depends on [4Fe-4S] cluster as a cofactor.

The catalysed reaction is (2R,3S)-3-isopropylmalate = (2S)-2-isopropylmalate. It functions in the pathway amino-acid biosynthesis; L-leucine biosynthesis; L-leucine from 3-methyl-2-oxobutanoate: step 2/4. In terms of biological role, catalyzes the isomerization between 2-isopropylmalate and 3-isopropylmalate, via the formation of 2-isopropylmaleate. This is 3-isopropylmalate dehydratase large subunit from Pelagibacter ubique (strain HTCC1062).